A 60-amino-acid polypeptide reads, in one-letter code: MAVQQNKKSPSKRGMHRSHNALALPGIAVEPTSGEVHLRHHISPNGFYRGRQVLKPKSEA.

Disordered regions lie at residues 1 to 28 (MAVQQNKKSPSKRGMHRSHNALALPGIA) and 41 to 60 (HISPNGFYRGRQVLKPKSEA). The segment covering 9-19 (SPSKRGMHRSH) has biased composition (basic residues).

It belongs to the bacterial ribosomal protein bL32 family.

The chain is Large ribosomal subunit protein bL32 from Verminephrobacter eiseniae (strain EF01-2).